The following is a 117-amino-acid chain: Immunoglobulin kappa variable 1D-17 (117 aa).

Residues 1–22 form the signal peptide; sequence MDMRVPAQLLGLLLLWFPGARC. Residues 23–45 are framework-1; it reads NIQMTQSPSAMSASVGDRVTITC. In terms of domain architecture, Ig-like spans 23 to 117; that stretch reads NIQMTQSPSA…YYCLQHNSYP (95 aa). An intrachain disulfide couples C45 to C110. The interval 46–56 is complementarity-determining-1; sequence RARQGISNYLA. The interval 57–71 is framework-2; sequence WFQQKPGKVPKHLIY. The segment at 72-78 is complementarity-determining-2; sequence AASSLQS. The segment at 79 to 110 is framework-3; sequence GVPSRFSGSGSGTEFTLTISSLQPEDFATYYC. Positions 111-117 are complementarity-determining-3; that stretch reads LQHNSYP.

As to quaternary structure, immunoglobulins are composed of two identical heavy chains and two identical light chains; disulfide-linked.

It is found in the secreted. The protein resides in the cell membrane. Its function is as follows. V region of the variable domain of immunoglobulin light chains that participates in the antigen recognition. Immunoglobulins, also known as antibodies, are membrane-bound or secreted glycoproteins produced by B lymphocytes. In the recognition phase of humoral immunity, the membrane-bound immunoglobulins serve as receptors which, upon binding of a specific antigen, trigger the clonal expansion and differentiation of B lymphocytes into immunoglobulins-secreting plasma cells. Secreted immunoglobulins mediate the effector phase of humoral immunity, which results in the elimination of bound antigens. The antigen binding site is formed by the variable domain of one heavy chain, together with that of its associated light chain. Thus, each immunoglobulin has two antigen binding sites with remarkable affinity for a particular antigen. The variable domains are assembled by a process called V-(D)-J rearrangement and can then be subjected to somatic hypermutations which, after exposure to antigen and selection, allow affinity maturation for a particular antigen. This is Immunoglobulin kappa variable 1D-17 from Homo sapiens (Human).